The chain runs to 459 residues: MSTKIVETITLECETGNYHSFCPISCVSWLYQKIEDSFFLVVGTKTCGYFLQNALGVMIFAEPRYAMAELEEGDISAHLNDYEELKTLCIRIRKDRDPSVIIWIGTCTTEIIKMDLEGMAPKLEYEIGVPILVARANGLDYAFTQGEDTVLAVMAHRCPDQEFPIGESKETKKKLFPFPLLKENNLVEYANHPPLVIFGSLPSNLVSQLDTELRRQFIKVSGWLPAQRYADLPSLGDGVYVCGVNPFLSRTATTLIRRKKCELIVAPFPIGPDGTRAWIERICPVFGIEAQSLEEIEERIWESLKDYLDLVRGKSVFFMGDNLIEISIARFLIRCGMIVYEIGIPYLDKRYQAAELALLKKTCIRMCMPIPRIVEKPDNSNQIRRMRELKPDLAITGMAHANPLGARGIGTKWSVEFTFAQIHGFANARDVLELVTRPLRRNENLDNLDRTTLVRKNNK.

Positions 22, 47, and 107 each coordinate [4Fe-4S] cluster.

The protein belongs to the BchN/ChlN family. In terms of assembly, protochlorophyllide reductase is composed of three subunits; ChlL, ChlN and ChlB. Forms a heterotetramer of two ChlB and two ChlN subunits. The cofactor is [4Fe-4S] cluster.

Its subcellular location is the plastid. The protein localises to the chloroplast. The enzyme catalyses chlorophyllide a + oxidized 2[4Fe-4S]-[ferredoxin] + 2 ADP + 2 phosphate = protochlorophyllide a + reduced 2[4Fe-4S]-[ferredoxin] + 2 ATP + 2 H2O. It functions in the pathway porphyrin-containing compound metabolism; chlorophyll biosynthesis (light-independent). In terms of biological role, component of the dark-operative protochlorophyllide reductase (DPOR) that uses Mg-ATP and reduced ferredoxin to reduce ring D of protochlorophyllide (Pchlide) to form chlorophyllide a (Chlide). This reaction is light-independent. The NB-protein (ChlN-ChlB) is the catalytic component of the complex. This chain is Light-independent protochlorophyllide reductase subunit N, found in Pinus contorta (Shore pine).